Consider the following 336-residue polypeptide: Syntaxin-31 (336 aa).

Topologically, residues 1 to 314 are cytoplasmic; it reads MGSTFRDRTV…QHLTRISSNR (314 aa). Disordered regions lie at residues 23–53 and 152–218; these read GAIP…KASR and RSEN…SQLR. Over residues 154–163 the composition is skewed to basic and acidic residues; it reads ENMKAHENRK. A compositionally biased stretch (polar residues) spans 164–181; that stretch reads QLFSTKNAVDSPPQNNAK. The segment covering 190–202 has biased composition (low complexity); that stretch reads SSSSNPFGNLQQP. The t-SNARE coiled-coil homology domain maps to 244–306; the sequence is ENYSQSRAVA…EGARSALLQH (63 aa). Residues 315–335 form a helical; Anchor for type IV membrane protein membrane-spanning segment; it reads WLMMKIFAVIILFLIVFLFFV. Residue alanine 336 is a topological domain, vesicular.

It belongs to the syntaxin family. Part of the t-SNARE complex. Interacts with CDC48A, but not with VPS45.

It is found in the golgi apparatus. Its subcellular location is the cis-Golgi network membrane. The protein resides in the cytoplasm. The protein localises to the endosome. Vesicle trafficking protein that functions in the secretory pathway. The polypeptide is Syntaxin-31 (SYP31) (Arabidopsis thaliana (Mouse-ear cress)).